The primary structure comprises 207 residues: Ribonuclease HII (207 aa).

Residues 17–207 (RIVAGVDEVG…SFKPLAAFVD (191 aa)) form the RNase H type-2 domain. The a divalent metal cation site is built by D23, E24, and D120.

Belongs to the RNase HII family. The cofactor is Mn(2+). Mg(2+) is required as a cofactor.

It localises to the cytoplasm. It catalyses the reaction Endonucleolytic cleavage to 5'-phosphomonoester.. Its function is as follows. Endonuclease that specifically degrades the RNA of RNA-DNA hybrids. This is Ribonuclease HII from Herpetosiphon aurantiacus (strain ATCC 23779 / DSM 785 / 114-95).